We begin with the raw amino-acid sequence, 445 residues long: tRNA modification GTPase MnmE (445 aa).

(6S)-5-formyl-5,6,7,8-tetrahydrofolate is bound by residues Arg-20, Glu-79, and Lys-119. The TrmE-type G domain occupies Gly-215–Glu-371. K(+) is bound at residue Asn-225. Residues Asn-225–Ser-230, Ser-244–Thr-250, and Asp-269–Gly-272 each bind GTP. Ser-229 provides a ligand contact to Mg(2+). Ser-244, Ile-246, and Thr-249 together coordinate K(+). A Mg(2+)-binding site is contributed by Thr-250. Lys-445 contributes to the (6S)-5-formyl-5,6,7,8-tetrahydrofolate binding site.

This sequence belongs to the TRAFAC class TrmE-Era-EngA-EngB-Septin-like GTPase superfamily. TrmE GTPase family. In terms of assembly, homodimer. Heterotetramer of two MnmE and two MnmG subunits. The cofactor is K(+).

The protein resides in the cytoplasm. Exhibits a very high intrinsic GTPase hydrolysis rate. Involved in the addition of a carboxymethylaminomethyl (cmnm) group at the wobble position (U34) of certain tRNAs, forming tRNA-cmnm(5)s(2)U34. This Rickettsia conorii (strain ATCC VR-613 / Malish 7) protein is tRNA modification GTPase MnmE.